The following is a 1504-amino-acid chain: DNA polymerase zeta catalytic subunit (1504 aa).

Zn(2+) is bound by residues Cys1398, Cys1401, Cys1414, and Cys1417. The segment at 1398–1417 (CCNCGEELTKICSLQLCDDC) adopts a CysA-type zinc-finger fold. The [4Fe-4S] cluster site is built by Cys1446, Cys1449, Cys1468, and Cys1473. Residues 1446–1473 (CRTCSYRYTSDAGIENDHIASKCNSYDC) carry the CysB motif motif.

It belongs to the DNA polymerase type-B family. As to quaternary structure, forms DNA polymerase zeta with REV7. [4Fe-4S] cluster is required as a cofactor.

It is found in the mitochondrion. The protein localises to the nucleus. The catalysed reaction is DNA(n) + a 2'-deoxyribonucleoside 5'-triphosphate = DNA(n+1) + diphosphate. Its function is as follows. Nonessential DNA polymerase. Required for DNA damage induced mutagenesis. Involved in DNA repair, mitochondrial DNA repair and translesion synthesis. Translesion synthesis in S.cerevisiae may use a specialized DNA polymerase that is not required for other DNA replicative processes. Has a role in the bypass of abasic (AP) sites. Highly inefficient in incorporating nucleotides opposite the AP site, but efficiently extends from nucleotides, particularly an A, inserted opposite the lesion. The sequence is that of DNA polymerase zeta catalytic subunit (REV3) from Saccharomyces cerevisiae (strain ATCC 204508 / S288c) (Baker's yeast).